Consider the following 80-residue polypeptide: Transcription elongation factor 1 homolog (80 aa).

C25, C28, C49, and C52 together coordinate Zn(2+).

It belongs to the ELOF1 family.

Its subcellular location is the nucleus. Transcription elongation factor implicated in the maintenance of proper chromatin structure in actively transcribed regions. The protein is Transcription elongation factor 1 homolog of Encephalitozoon cuniculi (strain GB-M1) (Microsporidian parasite).